A 555-amino-acid chain; its full sequence is Protein NRT1/ PTR FAMILY 2.1 (555 aa).

Helical transmembrane passes span 32 to 52 (TLLG…VFLI), 68 to 88 (IVNG…DSFF), 91 to 111 (IPVI…LTLI), 127 to 147 (ILCQ…LALV), 175 to 195 (FFNW…TAIV), 205 to 225 (LGFG…ISGK), 324 to 344 (VLPL…QASM), 369 to 389 (VIVL…IYPI), 401 to 421 (LQQV…SAIV), 437 to 457 (VLWL…HYMA), 476 to 496 (SVTS…INLI), and 517 to 537 (WVLV…SWYF).

This sequence belongs to the major facilitator superfamily. Proton-dependent oligopeptide transporter (POT/PTR) (TC 2.A.17) family. Expressed in roots.

It localises to the membrane. Functionally, transporter involved in a passive nitrate efflux. This chain is Protein NRT1/ PTR FAMILY 2.1 (NPF2.1), found in Arabidopsis thaliana (Mouse-ear cress).